Reading from the N-terminus, the 656-residue chain is Probable Xaa-Pro aminopeptidase P (656 aa).

The Mn(2+) site is built by D453, D464, E562, and E576.

Belongs to the peptidase M24B family. Mn(2+) serves as cofactor.

The catalysed reaction is Release of any N-terminal amino acid, including proline, that is linked to proline, even from a dipeptide or tripeptide.. Catalyzes the removal of a penultimate prolyl residue from the N-termini of peptides. The polypeptide is Probable Xaa-Pro aminopeptidase P (ampp) (Pyrenophora teres f. teres (strain 0-1) (Barley net blotch fungus)).